Here is a 114-residue protein sequence, read N- to C-terminus: Putative movement protein (114 aa).

The helical transmembrane segment at L27–L47 threads the bilayer. Residues R79–F114 are disordered. Residues G86 to R97 show a composition bias toward basic and acidic residues. Residues Q98 to F114 show a composition bias toward polar residues.

It belongs to the nanovirus movement protein family.

The protein localises to the host cell membrane. Functionally, may transport viral genome to neighboring plant cells directly through plasmosdesmata, without any budding. The movement protein allows efficient cell to cell propagation, by bypassing the host cell wall barrier. The sequence is that of Putative movement protein (DNA-M) from Faba bean necrotic yellows virus (isolate Syrian SV292-88) (FBNYV).